The chain runs to 1218 residues: NACHT, LRR and PYD domains-containing protein 1a allele 3 (1218 aa).

Over residues 1 to 29 (MGESQSKQESNTRVAQHGSQQDVDPTFQT) the composition is skewed to polar residues. 2 disordered regions span residues 1–44 (MGES…QVEQ) and 71–91 (EMDH…DRSE). Positions 77 to 87 (RRHSHQSKKKL) are enriched in basic residues. The region spanning 175–484 (QLVIIEGAAG…EFFAAMSYIL (310 aa)) is the NACHT domain. 181–188 (GAAGIGKS) contacts ATP. LRR repeat units lie at residues 343 to 364 (KERN…LTLC), 673 to 693 (NLEE…RSLC), and 730 to 750 (RLAE…RQLC). Polar residues predominate over residues 799 to 815 (TMPTENTDGEESLTSSK). Residues 799–842 (TMPTENTDGEESLTSSKQQQQQSGDKHMEPLGTDDDFWGPSGPV) are disordered. The tract at residues 835-968 (FWGPSGPVST…HFAVLENPSF (134 aa)) is ZU5. The FIIND domain maps to 835–1118 (FWGPSGPVST…LRPALPRMAS (284 aa)). The tract at residues 969-1118 (SPMGVLLRMI…LRPALPRMAS (150 aa)) is UPA. Residues 1122–1211 (DAPALLHFVD…HLIMDLLEKS (90 aa)) enclose the CARD domain.

Belongs to the NLRP family. As to quaternary structure, interacts (via LRR repeats) with BCL2 and BCL2L1 (via the loop between motifs BH4 and BH3). Interacts with NOD2; this interaction is enhanced in the presence of muramyl dipeptide (MDP) and increases IL1B release. Interacts with EIF2AK2/PKR; this interaction requires EIF2AK2 activity, is accompanied by EIF2AK2 autophosphorylation and promotes inflammasome assembly in response to danger-associated signals. Interacts with MEFV; this interaction targets Nlrp1a to degradation by autophagy, hence preventing excessive IL1B- and IL18-mediated inflammation. Interacts with DPP9; leading to inhibit activation of the inflammasome. DPP9 acts via formation of a ternary complex, composed of a DPP9 homodimer, one full-length NLRP1 protein, and one cleaved C-terminus of Nlrp1a (NACHT, LRR and PYD domains-containing protein 1a, C-terminus). Interacts with DPP8; leading to inhibit activation of the inflammasome, probably via formation of a ternary complex with DPP8. Interacts with the C-terminal part of Nlrp1a (NACHT, LRR and PYD domains-containing protein 1a, C-terminus) in absence of pathogens and other damage-associated signals. In terms of assembly, interacts with the N-terminal part of Nlrp1a (NACHT, LRR and PYD domains-containing protein 1a, N-terminus) in absence of pathogens and other damage-associated signals. Homomultimer; forms the Nlrp1a inflammasome polymeric complex, a filament composed of homopolymers of this form in response to pathogens and other damage-associated signals. The Nlrp1a inflammasome polymeric complex directly recruits pro-caspase-1 (proCASP1) independently of PYCARD/ASC. Interacts (via CARD domain) with CASP1 (via CARD domain); leading to CASP1 activation. Post-translationally, autocatalytically cleaved. Autocatalytic cleavage in FIIND region occurs constitutively, prior to activation signals, and is required for inflammasome activity (IL1B release), possibly by facilitating CASP1 binding. Both N- and C-terminal parts remain associated non-covalently. In terms of processing, ubiquitinated in response to pathogen-associated signals, leading to its degradation by the proteasome and subsequent release of the cleaved C-terminal part of the protein (NACHT, LRR and PYD domains-containing protein 1a, C-terminus), which polymerizes and forms the Nlrp1a inflammasome.

Its subcellular location is the cytoplasm. The protein resides in the cytosol. The protein localises to the nucleus. It localises to the inflammasome. With respect to regulation, activated by pathogens and other damage-associated signals: activation promotes ubiquitination and degradation of the N-terminal part, releasing the cleaved C-terminal part of the protein (NACHT, LRR and PYD domains-containing protein 1a, C-terminus), which polymerizes and forms the Nlrp1a inflammasome. Nlrp1a inflammasome is inhibited by DPP8 and DPP9, which sequester the C-terminal fragment of Nlrp1a (NACHT, LRR and PYD domains-containing protein 1a, C-terminus) in a ternary complex, thereby preventing Nlrp1a oligomerization and activation. Nlrp1a inflammasome is strongly activated by Val-boroPro (Talabostat, PT-100), an inhibitor of dipeptidyl peptidases DPP8 and DPP9. Val-boroPro relieves inhibition of DPP8 and/or DPP9 by promoting disruption of the ternary complex, releasing its C-terminal part from autoinhibition. Not activated by cleavage by B.anthracis lethal toxin (LT) endopeptidase. In terms of biological role, acts as the sensor component of the Nlrp1a inflammasome, which mediates inflammasome activation in response to various pathogen-associated signals, leading to subsequent pyroptosis. Inflammasomes are supramolecular complexes that assemble in the cytosol in response to pathogens and other damage-associated signals and play critical roles in innate immunity and inflammation. Acts as a recognition receptor (PRR): recognizes specific pathogens and other damage-associated signals, such as Val-boroPro inhibitor, and mediates the formation of the inflammasome polymeric complex. In response to pathogen-associated signals, the N-terminal part of Nlrp1a is degraded by the proteasome, releasing the cleaved C-terminal part of the protein (NACHT, LRR and PYD domains-containing protein 1a, C-terminus), which polymerizes to initiate the formation of the inflammasome complex: the inflammasome directly recruits pro-caspase-1 (proCASP1) independently of PYCARD/ASC and promotes caspase-1 (CASP1) activation, which subsequently cleaves and activates inflammatory cytokines IL1B and IL18 and gasdermin-D (GSDMD), leading to pyroptosis. In the absence of GSDMD expression, the Nlrp1a inflammasome is able to recruit and activate CASP8, leading to activation of gasdermin-E (GSDME). Constitutes the precursor of the Nlrp1a inflammasome, which mediates autoproteolytic processing within the FIIND domain to generate the N-terminal and C-terminal parts, which are associated non-covalently in absence of pathogens and other damage-associated signals. Functionally, regulatory part that prevents formation of the Nlrp1a inflammasome: in absence of pathogens and other damage-associated signals, interacts with the C-terminal part of Nlrp1a (NACHT, LRR and PYD domains-containing protein 1a, C-terminus), preventing activation of the Nlrp1a inflammasome. In response to pathogen-associated signals, this part is ubiquitinated by the N-end rule pathway and degraded by the proteasome, releasing the cleaved C-terminal part of the protein, which polymerizes and forms the Nlrp1a inflammasome. Its function is as follows. Constitutes the active part of the Nlrp1a inflammasome. In absence of pathogens and other damage-associated signals, interacts with the N-terminal part of Nlrp1a (NACHT, LRR and PYD domains-containing protein 1a, N-terminus), preventing activation of the Nlrp1a inflammasome. In response to pathogen-associated signals, the N-terminal part of Nlrp1a is degraded by the proteasome, releasing this form, which polymerizes to form the Nlrp1a inflammasome complex: the Nlrp1a inflammasome complex then directly recruits pro-caspase-1 (proCASP1) and promotes caspase-1 (CASP1) activation, leading to gasdermin-D (GSDMD) cleavage and subsequent pyroptosis. This chain is NACHT, LRR and PYD domains-containing protein 1a allele 3, found in Rattus norvegicus (Rat).